The sequence spans 570 residues: Formate--tetrahydrofolate ligase (570 aa).

65–72 contributes to the ATP binding site; that stretch reads TPLGEGKT.

It belongs to the formate--tetrahydrofolate ligase family.

The enzyme catalyses (6S)-5,6,7,8-tetrahydrofolate + formate + ATP = (6R)-10-formyltetrahydrofolate + ADP + phosphate. It participates in one-carbon metabolism; tetrahydrofolate interconversion. The protein is Formate--tetrahydrofolate ligase of Herpetosiphon aurantiacus (strain ATCC 23779 / DSM 785 / 114-95).